The following is a 983-amino-acid chain: Polyhomeotic-like protein 3 (983 aa).

Disordered stretches follow at residues 1–34 (MDTE…MQQP), 103–149 (LSSG…SSTS), 225–283 (VLSS…TAVT), 313–332 (LHSP…QQQQ), 339–410 (LQNS…SQSP), 477–509 (PGQQ…STSP), and 601–620 (DECV…PAAI). Low complexity-rich tracts occupy residues 9-29 (TSSV…TSSS) and 103-126 (LSSG…SQTS). The segment covering 127–139 (INLSTSPTPAQLI) has biased composition (polar residues). Over residues 140–149 (SRSQASSSTS) the composition is skewed to low complexity. A compositionally biased stretch (polar residues) spans 225–257 (VLSSSQNGPPKSTSQTQSLTICHNKTTVTSSKI). Basic and acidic residues predominate over residues 258–271 (SQRDPSPESNKKGE). Residues Ser263 and Ser272 each carry the phosphoserine modification. Positions 274 to 283 (SLESRSTAVT) are enriched in polar residues. Ser315 carries the phosphoserine modification. Residues 365–383 (SNAQSQHCSPIQSHPSPLT) are compositionally biased toward polar residues. Residues 384–398 (VSPNQSQSAQQSVVV) are compositionally biased toward low complexity. Residues 477–489 (PGQQIVSPSHQQY) show a composition bias toward polar residues. Residues 490–506 (SSLQSSPIPIASPPQMS) are compositionally biased toward low complexity. A phosphothreonine mark is found at Thr609 and Thr614. Position 616 is a phosphoserine (Ser616). Glycyl lysine isopeptide (Lys-Gly) (interchain with G-Cter in SUMO2) cross-links involve residues Lys691 and Lys732. The HD1 motif lies at 691-720 (KPPQAIVKPQILTHVIEGFVIQEGLEPFPV). A phosphoserine mark is found at Ser761 and Ser762. The segment at 776 to 810 (EEMDSELLKCEFCGKMGYANEFLRSKRFCTMSCAK) adopts an FCS-type zinc-finger fold. 4 residues coordinate Zn(2+): Cys785, Cys788, Cys804, and Cys808. A Glycyl lysine isopeptide (Lys-Gly) (interchain with G-Cter in SUMO2) cross-link involves residue Lys810. Disordered regions lie at residues 827–847 (RKPD…PDGA) and 864–889 (EEDL…SERE). The 65-residue stretch at 919-983 (WTVDDVWAFI…CARINSLKES (65 aa)) folds into the SAM domain.

As to quaternary structure, component of a PRC1-like complex.

The protein localises to the nucleus. In terms of biological role, component of a Polycomb group (PcG) multiprotein PRC1-like complex, a complex class required to maintain the transcriptionally repressive state of many genes, including Hox genes, throughout development. PcG PRC1 complex acts via chromatin remodeling and modification of histones; it mediates monoubiquitination of histone H2A 'Lys-119', rendering chromatin heritably changed in its expressibility. The sequence is that of Polyhomeotic-like protein 3 (PHC3) from Homo sapiens (Human).